The following is a 495-amino-acid chain: uncharacterized protein (495 aa).

12 helical membrane-spanning segments follow: residues 43-63 (IIIS…MPSI), 75-95 (TLVV…PLIF), 106-126 (PLNI…ALSV), 128-148 (LAMF…GLGI), 168-188 (IYFL…GFIA), 196-216 (WEFW…VVFL), 284-304 (PIMI…YLLF), 323-343 (GLTY…LLPL), 366-386 (PMAF…GWTV), 390-410 (VFWF…VMTF), 426-446 (ASAM…FPLF), and 461-481 (SLLA…YMFG).

It belongs to the major facilitator superfamily. CAR1 family.

It is found in the membrane. This is an uncharacterized protein from Schizosaccharomyces pombe (strain 972 / ATCC 24843) (Fission yeast).